The sequence spans 644 residues: MLQDNPLLAQLKQQLHSQTPRAEGVVKATEKGFGFLEVDAQKSYFIPPPQMKKVMHGDRVTAVIHTQKDRETAEPEELIEPFLTRFVGKVHKKDDRLSIVPDHPLLKDAIPCRADRNCEHDFKEGDWAVAQMRRHPLKGDRGFYADLTHFITYSDDHFVPWWVTLARHNLEKEAPNGVATEMLDEGLERRDLTALNFVTIDSASTQDMDDALYVEEGADGKLHLTVAIADPTAWIAEGSKLDDSAKVRAFTNYLPGFNIPMLPRELSDDLCSLRPNQIRPVLACRMTIAADGTIEDDIEFFAATIESKAKLAYDDVSNWLEGAGNWKPESEAIAQQITLLQRVCLSRGEWRKTHALVFKDRPDYRFVLGEKGEVLDIVAEPRRIANRIVEESMIAANICAARVLRDKLGFGIYNVHTGFDPANTEALAALLKTHDVHVDPQEVLTLEGFCKLRRELDAQPSGFLDSRIRRFQSYAEISTEPGPHFGLGLEAYATWTSPIRKYGDMVNHRLLKAIVKGETIARPQDEATVQMAERRRLNRMAERDVGDWLYARFLSDKAGTDTRFAAEIIDISRGGMRVRLVENGAVAFIPAPFLHAVRDELVCSQENGSVQIKGETVYKVTDVIDVNIAEVRMETRSIIARPVV.

Residues 189–516 (RRDLTALNFV…NHRLLKAIVK (328 aa)) form the RNB domain. An S1 motif domain is found at 561-643 (DTRFAAEIID…ETRSIIARPV (83 aa)).

It belongs to the RNR ribonuclease family. RNase II subfamily.

The protein resides in the cytoplasm. It carries out the reaction Exonucleolytic cleavage in the 3'- to 5'-direction to yield nucleoside 5'-phosphates.. Involved in mRNA degradation. Hydrolyzes single-stranded polyribonucleotides processively in the 3' to 5' direction. The polypeptide is Exoribonuclease 2 (Enterobacter sp. (strain 638)).